Consider the following 358-residue polypeptide: tRNA-specific 2-thiouridylase MnmA (358 aa).

ATP-binding positions include Ala10 to Ser17 and Met36. Cys105 (nucleophile) is an active-site residue. A disulfide bond links Cys105 and Cys202. Gly129 serves as a coordination point for ATP. The tract at residues Lys152–Gln154 is interaction with tRNA. Cys202 functions as the Cysteine persulfide intermediate in the catalytic mechanism. The tract at residues Arg308 to Tyr309 is interaction with tRNA.

The protein belongs to the MnmA/TRMU family.

The protein resides in the cytoplasm. The enzyme catalyses S-sulfanyl-L-cysteinyl-[protein] + uridine(34) in tRNA + AH2 + ATP = 2-thiouridine(34) in tRNA + L-cysteinyl-[protein] + A + AMP + diphosphate + H(+). Its function is as follows. Catalyzes the 2-thiolation of uridine at the wobble position (U34) of tRNA, leading to the formation of s(2)U34. The polypeptide is tRNA-specific 2-thiouridylase MnmA (Magnetococcus marinus (strain ATCC BAA-1437 / JCM 17883 / MC-1)).